The chain runs to 300 residues: UDP-N-acetylenolpyruvoylglucosamine reductase (300 aa).

The 165-residue stretch at 30 to 194 (RVGGPADFFV…IGATFVLDSD (165 aa)) folds into the FAD-binding PCMH-type domain. Arginine 174 is an active-site residue. Serine 223 functions as the Proton donor in the catalytic mechanism. Glutamate 293 is an active-site residue.

It belongs to the MurB family. FAD serves as cofactor.

The protein localises to the cytoplasm. The catalysed reaction is UDP-N-acetyl-alpha-D-muramate + NADP(+) = UDP-N-acetyl-3-O-(1-carboxyvinyl)-alpha-D-glucosamine + NADPH + H(+). It functions in the pathway cell wall biogenesis; peptidoglycan biosynthesis. In terms of biological role, cell wall formation. The protein is UDP-N-acetylenolpyruvoylglucosamine reductase of Geobacter sulfurreducens (strain ATCC 51573 / DSM 12127 / PCA).